A 307-amino-acid chain; its full sequence is uncharacterized protein (307 aa).

The EAL domain occupies 54–307 (RHYLSTSMRV…KALPVDFFRE (254 aa)). Transmembrane regions (helical) follow at residues 158-178 (PGFL…AHAL) and 203-223 (ALGV…LAYL).

The protein localises to the cell membrane. This is an uncharacterized protein from Mycobacterium tuberculosis (strain CDC 1551 / Oshkosh).